The following is a 639-amino-acid chain: Kininogen-1 (639 aa).

A signal peptide spans 1–18 (MKLITILLLCSRLLPSLA). One can recognise a Cystatin kininogen-type 1 domain in the interval 28 to 132 (CNDESLFQAV…TQICNITPGK (105 aa)). Cystine bridges form between Cys28–Cys609, Cys83–Cys94, Cys107–Cys126, Cys142–Cys145, Cys206–Cys218, Cys229–Cys248, Cys264–Cys267, Cys328–Cys340, and Cys351–Cys370. The N-linked (GlcNAc...) asparagine glycan is linked to Asn82. Residues 151–254 (VDSPELGPVL…SDSCEFYPGD (104 aa)) form the Cystatin kininogen-type 2 domain. 2 N-linked (GlcNAc...) asparagine glycosylation sites follow: Asn169 and Asn205. The Cystatin kininogen-type 3 domain occupies 273-376 (VDSPELKEAL…TVKCKVLDMT (104 aa)). Residue Asn294 is glycosylated (N-linked (GlcNAc...) asparagine). Position 332 is a phosphoserine (Ser332). Disordered stretches follow at residues 438 to 462 (NHQG…GHGH) and 476 to 547 (GYDH…LNPP). The segment covering 482–502 (PVGHGHGQRHGHGHGHGHGRD) has biased composition (basic residues). The segment covering 503–519 (KHTNKDKNNVKHTDQRR) has biased composition (basic and acidic residues). Polar residues predominate over residues 522–537 (LTSSSEDNTTSTQIQG). Asn529 is a glycosylation site (N-linked (GlcNAc...) asparagine).

In terms of processing, bradykinin is released from kininogen by plasma kallikrein. Phosphorylated by FAM20C in the extracellular medium. Post-translationally, bradykinin is inactivated by ACE, which removes the dipeptide Arg-Phe from its C-terminus. Plasma.

It localises to the secreted. It is found in the extracellular space. In terms of biological role, kininogens are inhibitors of thiol proteases. HMW-kininogen plays an important role in blood coagulation by helping to position optimally prekallikrein and factor XI next to factor XII; HMW-kininogen inhibits the thrombin- and plasmin-induced aggregation of thrombocytes. LMW-kininogen inhibits the aggregation of thrombocytes. LMW-kininogen is in contrast to HMW-kininogen not involved in blood clotting. The active peptide bradykinin is a potent vasodilatator that is released from HMW-kininogen shows a variety of physiological effects: (A) influence in smooth muscle contraction, (B) induction of hypotension, (C) natriuresis and diuresis, (D) decrease in blood glucose level, (E) it is a mediator of inflammation and causes (E1) increase in vascular permeability, (E2) stimulation of nociceptors (4E3) release of other mediators of inflammation (e.g. prostaglandins), (F) it has a cardioprotective effect (directly via bradykinin action, indirectly via endothelium-derived relaxing factor action). This Rattus norvegicus (Rat) protein is Kininogen-1 (Kng1).